The chain runs to 151 residues: Deoxyuridine 5'-triphosphate nucleotidohydrolase (151 aa).

Residues 70 to 72, N83, 87 to 89, and M97 each bind substrate; these read RSG and LID.

It belongs to the dUTPase family. Mg(2+) serves as cofactor.

It carries out the reaction dUTP + H2O = dUMP + diphosphate + H(+). The protein operates within pyrimidine metabolism; dUMP biosynthesis; dUMP from dCTP (dUTP route): step 2/2. In terms of biological role, this enzyme is involved in nucleotide metabolism: it produces dUMP, the immediate precursor of thymidine nucleotides and it decreases the intracellular concentration of dUTP so that uracil cannot be incorporated into DNA. The protein is Deoxyuridine 5'-triphosphate nucleotidohydrolase of Pseudomonas paraeruginosa (strain DSM 24068 / PA7) (Pseudomonas aeruginosa (strain PA7)).